The sequence spans 540 residues: GMP synthase [glutamine-hydrolyzing] (540 aa).

Residues K24–D217 enclose the Glutamine amidotransferase type-1 domain. C101 (nucleophile) is an active-site residue. Residues H191 and E193 contribute to the active site. One can recognise a GMPS ATP-PPase domain in the interval W218 to R415. S245–S251 is an ATP binding site.

As to quaternary structure, homodimer.

It carries out the reaction XMP + L-glutamine + ATP + H2O = GMP + L-glutamate + AMP + diphosphate + 2 H(+). It participates in purine metabolism; GMP biosynthesis; GMP from XMP (L-Gln route): step 1/1. Functionally, catalyzes the synthesis of GMP from XMP. This Nitrobacter hamburgensis (strain DSM 10229 / NCIMB 13809 / X14) protein is GMP synthase [glutamine-hydrolyzing].